Consider the following 2073-residue polypeptide: Dedicator of cytokinesis protein 11 (2073 aa).

A Phosphoserine modification is found at S12. T16 is modified (phosphothreonine). 2 positions are modified to phosphoserine: S23 and S161. The PH domain maps to G165–Q272. Y248 carries the post-translational modification Phosphotyrosine. A phosphoserine mark is found at S306 and S445. The C2 DOCK-type domain maps to K640–E818. Residues Q1227–S1267 are disordered. Phosphoserine occurs at positions 1237 and 1240. The span at S1254–S1267 shows a compositional bias: low complexity. Residues K1609–L2036 form the DOCKER domain.

This sequence belongs to the DOCK family. Interacts with CDC42. As to expression, expressed in spleen, thymus, mesenteric lymph nodes (MLN), bone marrow and peripheral blood lymphocytes. Enriched in B-cells from germinal centers. Expressed in B-, T- and dendritic cells as well as Purkinje cells.

Its function is as follows. Guanine nucleotide-exchange factor (GEF) that activates CDC42 by exchanging bound GDP for free GTP. Required for marginal zone (MZ) B-cell development, is associated with early bone marrow B-cell development, MZ B-cell formation, MZ B-cell number and marginal metallophilic macrophages morphology. Facilitates filopodia formation through the activation of CDC42. The polypeptide is Dedicator of cytokinesis protein 11 (Mus musculus (Mouse)).